The following is a 133-amino-acid chain: Interferon alpha-inducible protein 27-like protein 2 (133 aa).

3 helical membrane-spanning segments follow: residues 8 to 28 (AAIG…AVGF), 51 to 71 (GGGV…AAGL), and 73 to 93 (TSSN…LGGA). The interval 93–133 (AKRASPSPPPGGPRPEGEQPGENVPQVEPPKSPLGPEKHEK) is disordered.

It belongs to the IFI6/IFI27 family.

The protein resides in the mitochondrion membrane. Plays a role in the apoptotic process and has a pro-apoptotic activity. The chain is Interferon alpha-inducible protein 27-like protein 2 from Bos taurus (Bovine).